A 397-amino-acid polypeptide reads, in one-letter code: S-adenosylmethionine synthase (397 aa).

ATP is bound at residue His-16. Asp-18 lines the Mg(2+) pocket. Glu-44 lines the K(+) pocket. L-methionine contacts are provided by Glu-57 and Gln-100. The segment at 100–110 (QSPDIAQGVNE) is flexible loop. ATP-binding positions include 175–177 (DAK), 242–243 (RF), Asp-251, 257–258 (RK), Ala-274, and Lys-278. An L-methionine-binding site is contributed by Asp-251. Lys-282 lines the L-methionine pocket.

This sequence belongs to the AdoMet synthase family. Homotetramer; dimer of dimers. It depends on Mg(2+) as a cofactor. K(+) serves as cofactor.

Its subcellular location is the cytoplasm. The enzyme catalyses L-methionine + ATP + H2O = S-adenosyl-L-methionine + phosphate + diphosphate. It functions in the pathway amino-acid biosynthesis; S-adenosyl-L-methionine biosynthesis; S-adenosyl-L-methionine from L-methionine: step 1/1. Its function is as follows. Catalyzes the formation of S-adenosylmethionine (AdoMet) from methionine and ATP. The overall synthetic reaction is composed of two sequential steps, AdoMet formation and the subsequent tripolyphosphate hydrolysis which occurs prior to release of AdoMet from the enzyme. The protein is S-adenosylmethionine synthase of Streptococcus thermophilus (strain CNRZ 1066).